A 1373-amino-acid chain; its full sequence is TAL effector protein PthXo1 (1373 aa).

Disordered regions lie at residues 1–68 (MDPI…SAGS) and 127–152 (AARP…PAAQ). Residues 131 to 141 (PRAKPAPRRRA) show a composition bias toward basic residues. Residues 142-152 (AQPSDASPAAQ) show a composition bias toward low complexity. The stretch at 221 to 239 (THEDIVGVGKQWSGARALE) is one Cryptic repeat -1 repeat. Residues 256–273 (DTGQLVKIAKRGGVTAVE) form a Cryptic repeat 0 repeat. Core repeat repeat units lie at residues 289–322 (LTPA…QAHG), 323–356 (LTPA…QAHG), 357–390 (LPPD…QAHG), 391–424 (LTPD…QAHG), 425–458 (LTPD…QAHG), 459–492 (LTPD…QAHG), 493–525 (LTPD…QAHG), 526–559 (LTPD…QTHG), 560–593 (LTPA…QAHG), 594–627 (LTPD…QAHG), 628–661 (LTPD…QAHG), 662–695 (LTPD…QAHG), 696–729 (LTQV…QAHG), 730–763 (LTPA…QAHG), 764–797 (LTPD…QAHG), 798–831 (LTQE…QAHG), 832–865 (LTPD…QAHG), 866–899 (LTPA…QDHG), 900–933 (LTLA…QAHG), 934–967 (LTQD…QDHG), 968–1001 (LTPD…QDHG), 1002–1034 (LTLD…QDHG), and 1035–1068 (LTPD…QDHG). HEAT repeat units lie at residues 714–760 (LETV…VLCQ), 782–828 (LETV…VLCQ), 850–893 (LETV…LLPV), and 918–961 (LETV…LLPV). One copy of the HEAT 5 repeat lies at 1053–1091 (LETVQRLLPVLCQDHGLTPNQVVAIASNGGKQALESIVA). Residues 1069-1087 (LTPNQVVAIASNGGKQALE) form a Core repeat 23.5 repeat. The segment at 1136-1364 (RVNRRIGERT…ELAWLMELLP (229 aa)) is acidic activation domain. The Nuclear localization signal NLS1 signature appears at 1222-1225 (KRAK). Residues 1250–1286 (LDAPSPMHEGDQTGASSRKRSRSDRAVTGPSAQHSFE) are disordered. Residues 1268–1271 (KRSR) carry the Nuclear localization signal NLS2 motif. The Nuclear localization signal NLS3 motif lies at 1305–1308 (KRPR).

Belongs to the transcription activator-like effector (TALE) family.

Its subcellular location is the secreted. The protein localises to the host nucleus. Functionally, avirulence protein. Acts as a transcription factor in rice, inducing expression of a number of host genes including SWEET11 (Os8N3, XA13, AC Q6YZF3) in susceptible plants with the Xa13 allele. Plants with the xa13 allele, which has an altered promoter, are resistant to bacterial blight caused by this bacterial strain and do not induce SWEET11. The xa13 allele elicits an atypical hypersensitive response (HR). PthXo1 binds SWEET11 promoter DNA in a sequence-specific manner. This Xanthomonas oryzae pv. oryzae (strain PXO99A) protein is TAL effector protein PthXo1 (pthXo1).